The following is a 268-amino-acid chain: Undecaprenyl-diphosphatase (268 aa).

7 consecutive transmembrane segments (helical) span residues 47 to 67 (FAVL…FAKL), 83 to 103 (FVIG…VAGS), 109 to 129 (LFNP…LLWV), 144 to 164 (FPLP…IPGV), 184 to 204 (AAEF…VYDF), 218 to 238 (IVAI…KTFL), and 246 to 266 (FELF…ALAM).

Belongs to the UppP family.

It localises to the cell inner membrane. The catalysed reaction is di-trans,octa-cis-undecaprenyl diphosphate + H2O = di-trans,octa-cis-undecaprenyl phosphate + phosphate + H(+). Catalyzes the dephosphorylation of undecaprenyl diphosphate (UPP). Confers resistance to bacitracin. This chain is Undecaprenyl-diphosphatase, found in Rhodopseudomonas palustris (strain BisB5).